Here is a 106-residue protein sequence, read N- to C-terminus: Translation initiation factor 1A 2 (106 aa).

The disordered stretch occupies residues 1–24 (MRKRREGTANNSPTPEVTRVRTPR). The S1-like domain occupies 18–92 (TRVRTPRKEN…SKADVIWKYT (75 aa)).

It belongs to the eIF-1A family.

Functionally, seems to be required for maximal rate of protein biosynthesis. Enhances ribosome dissociation into subunits and stabilizes the binding of the initiator Met-tRNA(I) to 40 S ribosomal subunits. This is Translation initiation factor 1A 2 (eIF1A2) from Methanosarcina mazei (strain ATCC BAA-159 / DSM 3647 / Goe1 / Go1 / JCM 11833 / OCM 88) (Methanosarcina frisia).